A 464-amino-acid polypeptide reads, in one-letter code: Dihydrolipoyl dehydrogenase (464 aa).

FAD-binding positions include Glu36–Cys44, Lys53, and Ala119. Cys44 and Cys49 are oxidised to a cystine. NAD(+) contacts are provided by residues Gly184–Ile188, Glu207, and Ala269–Arg272. The FAD site is built by Asp311 and Ala319. His443 acts as the Proton acceptor in catalysis.

This sequence belongs to the class-I pyridine nucleotide-disulfide oxidoreductase family. In terms of assembly, homodimer. It depends on FAD as a cofactor.

It localises to the cytoplasm. The catalysed reaction is N(6)-[(R)-dihydrolipoyl]-L-lysyl-[protein] + NAD(+) = N(6)-[(R)-lipoyl]-L-lysyl-[protein] + NADH + H(+). Its function is as follows. The branched-chain alpha-keto dehydrogenase complex catalyzes the overall conversion of alpha-keto acids to acyl-CoA and CO(2). It contains multiple copies of 3 enzymatic components: branched-chain alpha-keto acid decarboxylase (E1), lipoamide acyltransferase (E2) and lipoamide dehydrogenase (E3). This is Dihydrolipoyl dehydrogenase from Pseudomonas aeruginosa (strain ATCC 15692 / DSM 22644 / CIP 104116 / JCM 14847 / LMG 12228 / 1C / PRS 101 / PAO1).